The chain runs to 496 residues: SRCTHLENRDFVTGTQGTTRVTLVLELGGCVTITAEGKPSVDVWLDAIYQESPAKTREYCLHAKLSETKVAARCPTMGPAALAEERQIGTVCKRDQSDRGWGNHCGLFGKGSIVACVKAACEAKKKATGYVYDANKIVYTVKVEPHTGDYVAANETHKGRKTATFTVSSEKTILTLGEYGDVSLLCRVASGVDLAQTIILELDKTAEHLPTAWQVHRDWFNDLALPWKHEGNPHWNNAERLVEFGAPHAVKMDVYNLGDQTGVLLKALAGVPVAHIEGNKYHLKSGHVTCEVGLEKLKMKGLTYTMCDKSKFAWKRTPTDSGHDTVVMEVTFSGSKPCRIPVRAVAHGSPDVNVAMLITPNPTIENDGGGFIEMQLPPGDNIIYVGELSHQWFQTGSSIGRVFQKTRKGIERLTVIGEHAWDFGSAGGFFSSIGKAVHTVLGGAFNSIFGGVGFLPKLLMGVALAWLGLNTRNPTMSISFLLTGGLVLAMTLGVGA.

Residues 1 to 447 lie on the Extracellular side of the membrane; it reads SRCTHLENRD…HTVLGGAFNS (447 aa). Cystine bridges form between Cys-3/Cys-30, Cys-60/Cys-116, Cys-60/Cys-121, Cys-74/Cys-105, Cys-92/Cys-116, and Cys-92/Cys-121. The segment at 98–111 is fusion peptide; it reads DRGWGNHCGLFGKG. Asn-154 carries an N-linked (GlcNAc...) asparagine; by host glycan. Cystine bridges form between Cys-186/Cys-290 and Cys-307/Cys-338. Residues 448-468 traverse the membrane as a helical segment; that stretch reads IFGGVGFLPKLLMGVALAWLG. Topologically, residues 469 to 479 are cytoplasmic; it reads LNTRNPTMSIS. The helical transmembrane segment at 480–496 threads the bilayer; it reads FLLTGGLVLAMTLGVGA.

In terms of assembly, homodimer; in the endoplasmic reticulum and Golgi. N-glycosylated.

It localises to the virion membrane. It is found in the host endoplasmic reticulum membrane. In terms of biological role, binds to host cell surface receptor and mediates fusion between viral and cellular membranes. Envelope protein is synthesized in the endoplasmic reticulum in the form of heterodimer with protein prM. They play a role in virion budding in the ER, and the newly formed immature particle is covered with 60 spikes composed of heterodimer between precursor prM and envelope protein E. The virion is transported to the Golgi apparatus where the low pH causes dissociation of PrM-E heterodimers and formation of E homodimers. prM-E cleavage is ineficient, and many virions are only partially matured. These uncleaved prM would play a role in immune evasion. In Louping ill virus (strain SB 526) (Li), this protein is Genome polyprotein.